The following is a 408-amino-acid chain: Peptidase T (408 aa).

Residue histidine 81 participates in Zn(2+) binding. Residue aspartate 83 is part of the active site. Residue aspartate 142 participates in Zn(2+) binding. Glutamate 176 (proton acceptor) is an active-site residue. Zn(2+) is bound by residues glutamate 177, aspartate 199, and histidine 381.

This sequence belongs to the peptidase M20B family. It depends on Zn(2+) as a cofactor.

Its subcellular location is the cytoplasm. The catalysed reaction is Release of the N-terminal residue from a tripeptide.. In terms of biological role, cleaves the N-terminal amino acid of tripeptides. This Streptococcus gordonii (strain Challis / ATCC 35105 / BCRC 15272 / CH1 / DL1 / V288) protein is Peptidase T.